The primary structure comprises 363 residues: MNTVFNFSSGPAKLPIEVLQQAQQELCNWHGLGTSIMEISHRSDEFRQVAYESEQDLRSLLNIPDNYQVLFCHGGARAQFAAVPMNLLGKSKIADYIHGGYWSYSAAKEAHKYCQPRMIEVMTYINGWRGIKPMVEWVLSPDNVAYVHYCPNETIDGLTIDELPDFGNKIVVADFSSAILARPIDVSKYGVIYASAQKNIGPAGLAIVIIRDDLLINRASTKLPSILNYQLLANNKSMFNTPPTFAWYVSGLVFKWLKVQGGLVEIEKNNRAKAILLYNTIDNSEFYYNNILPVNRSYMNVPFYLANSALDDLFIIEARNAGLYALKGHRVAGGMRAALYNAMPLEGVKTLVQFMHNFACRYG.

L-glutamate-binding residues include Ser-9 and Arg-42. Residues 76-77, Trp-102, Thr-154, Asp-174, and Gln-197 contribute to the pyridoxal 5'-phosphate site; that span reads AR. Lys-198 bears the N6-(pyridoxal phosphate)lysine mark. 240–241 lines the pyridoxal 5'-phosphate pocket; that stretch reads NT.

This sequence belongs to the class-V pyridoxal-phosphate-dependent aminotransferase family. SerC subfamily. In terms of assembly, homodimer. The cofactor is pyridoxal 5'-phosphate.

The protein resides in the cytoplasm. It catalyses the reaction O-phospho-L-serine + 2-oxoglutarate = 3-phosphooxypyruvate + L-glutamate. The enzyme catalyses 4-(phosphooxy)-L-threonine + 2-oxoglutarate = (R)-3-hydroxy-2-oxo-4-phosphooxybutanoate + L-glutamate. The protein operates within amino-acid biosynthesis; L-serine biosynthesis; L-serine from 3-phospho-D-glycerate: step 2/3. It participates in cofactor biosynthesis; pyridoxine 5'-phosphate biosynthesis; pyridoxine 5'-phosphate from D-erythrose 4-phosphate: step 3/5. Catalyzes the reversible conversion of 3-phosphohydroxypyruvate to phosphoserine and of 3-hydroxy-2-oxo-4-phosphonooxybutanoate to phosphohydroxythreonine. The polypeptide is Phosphoserine aminotransferase (Baumannia cicadellinicola subsp. Homalodisca coagulata).